A 323-amino-acid chain; its full sequence is Cyclin-H (323 aa).

Ser5 carries the phosphoserine; by CDK8 modification. Ser132 is subject to Phosphoserine. Residues 296–323 (GYEDDDYVSKKPKQEEEEWTDDDLVDAL) are disordered. Position 304 is a phosphoserine; by CDK8 (Ser304). Residues 310–323 (EEEEWTDDDLVDAL) are compositionally biased toward acidic residues. A Phosphothreonine modification is found at Thr315.

Belongs to the cyclin family. Cyclin C subfamily. Associates primarily with CDK7 and MAT1 to form the CAK complex. CAK can further associate with the core-TFIIH to form the TFIIH basal transcription factor.

It is found in the nucleus. Regulates CDK7, the catalytic subunit of the CDK-activating kinase (CAK) enzymatic complex. CAK activates the cyclin-associated kinases CDK1, CDK2, CDK4 and CDK6 by threonine phosphorylation. CAK complexed to the core-TFIIH basal transcription factor activates RNA polymerase II by serine phosphorylation of the repetitive C-terminal domain (CTD) of its large subunit (POLR2A), allowing its escape from the promoter and elongation of the transcripts. Involved in cell cycle control and in RNA transcription by RNA polymerase II. Its expression and activity are constant throughout the cell cycle. This is Cyclin-H (Ccnh) from Rattus norvegicus (Rat).